The sequence spans 1476 residues: Copper-transporting ATPase 1 (1476 aa).

The Cytoplasmic segment spans residues 1–642; it reads MEPSMDVNSV…HKREIKQWRS (642 aa). HMA domains follow at residues 8–74 and 85–151; these read NSVT…FDAL and TDTL…LETG. The Cu(+) site is built by Thr18, Cys19, and Cys22. Thr152 is modified (phosphothreonine). HMA domains lie at 171–237 and 276–342; these read VVLK…FPAF and STAT…PGQY. Positions 182, 185, 287, and 290 each coordinate Cu(+). Thr326 carries the phosphothreonine modification. Phosphoserine occurs at positions 338, 352, 356, and 361. 3 HMA domains span residues 376 to 442, 478 to 544, and 554 to 620; these read QETV…FDAV, SKCY…FGAT, and GILK…FEAS. Cu(+)-binding residues include Cys387, Cys390, Cys489, Cys492, Cys565, and Cys568. A helical transmembrane segment spans residues 643–665; that stretch reads SFLVSLFFCTPVMGLMMYMMAME. N-linked (GlcNAc...) asparagine glycans are attached at residues Asn674 and Asn685. A run of 3 helical transmembrane segments spans residues 695 to 717, 736 to 760, and 770 to 788; these read ILPG…QFFG, MDVL…VAMY, and SFDT…RWLE. Asn887 is a glycosylation site (N-linked (GlcNAc...) asparagine). Residues 930 to 952 form a helical membrane-spanning segment; it reads YFVPFIVLVSIATLLVWIIIGFQ. N-linked (GlcNAc...) asparagine glycosylation occurs at Asn953. Residues 978-998 form a helical membrane-spanning segment; sequence AFQASITVLCIACPCSLGLAT. The active-site 4-aspartylphosphate intermediate is Asp1034. N-linked (GlcNAc...) asparagine glycosylation is found at Asn1130 and Asn1134. 2 helical membrane-spanning segments follow: residues 1347–1373 and 1379–1397; these read INFL…IGLV and GSAA…SLFL. Phosphoserine occurs at positions 1420 and 1422. Asn1448 carries an N-linked (GlcNAc...) asparagine glycan. Phosphoserine occurs at positions 1450, 1453, 1456, 1459, 1463, 1466, and 1476.

Belongs to the cation transport ATPase (P-type) (TC 3.A.3) family. Monomer. Interacts with PDZD11. Interacts with ATOX1 and COMMD1. Interacts with TYRP1. Directly interacts with SOD3; this interaction is copper-dependent and is required for SOD3 activity. As to expression, expressed in most tissues except liver.

The protein localises to the golgi apparatus. It is found in the trans-Golgi network membrane. The protein resides in the cell membrane. The catalysed reaction is Cu(+)(in) + ATP + H2O = Cu(+)(out) + ADP + phosphate + H(+). Functionally, may function in the export of copper from the cytoplasm to an intracellular organelle. It may serve as well for the export of other metals. The chain is Copper-transporting ATPase 1 (ATP7A) from Cricetulus griseus (Chinese hamster).